We begin with the raw amino-acid sequence, 190 residues long: dCTP deaminase, dUMP-forming (190 aa).

Residues 101–106 (KSSLGR), Asp119, 127–129 (TLE), Gln148, Tyr162, and Gln174 contribute to the dCTP site. Residue Glu129 is the Proton donor/acceptor of the active site. The tract at residues 162–190 (YGSASAGSKYQGQRGPTPSRSYENFIKNT) is disordered. A compositionally biased stretch (polar residues) spans 166–190 (SAGSKYQGQRGPTPSRSYENFIKNT).

The protein belongs to the dCTP deaminase family. As to quaternary structure, homotrimer.

It catalyses the reaction dCTP + 2 H2O = dUMP + NH4(+) + diphosphate. It participates in pyrimidine metabolism; dUMP biosynthesis; dUMP from dCTP: step 1/1. Bifunctional enzyme that catalyzes both the deamination of dCTP to dUTP and the hydrolysis of dUTP to dUMP without releasing the toxic dUTP intermediate. This Mycobacterium leprae (strain Br4923) protein is dCTP deaminase, dUMP-forming.